The following is a 172-amino-acid chain: Adenine phosphoribosyltransferase (172 aa).

This sequence belongs to the purine/pyrimidine phosphoribosyltransferase family. Homodimer.

It is found in the cytoplasm. It catalyses the reaction AMP + diphosphate = 5-phospho-alpha-D-ribose 1-diphosphate + adenine. The protein operates within purine metabolism; AMP biosynthesis via salvage pathway; AMP from adenine: step 1/1. Catalyzes a salvage reaction resulting in the formation of AMP, that is energically less costly than de novo synthesis. The chain is Adenine phosphoribosyltransferase from Exiguobacterium sibiricum (strain DSM 17290 / CCUG 55495 / CIP 109462 / JCM 13490 / 255-15).